The chain runs to 526 residues: Amino acid transporter AVT1E (526 aa).

A disordered region spans residues 1 to 49 (MKQNETFDQEREDLYHTFDEEDEESQTESSVPSTPLSRNRSEDVPVPWP). A compositionally biased stretch (basic and acidic residues) spans 8-18 (DQEREDLYHTF). 11 helical membrane passes run 140–160 (SVLNGINVLCGVALLTMPYAV), 165–185 (WLGLFILFSFGIITFYTGILL), 212–232 (ILVSILLYVELYASCVEYIIM), 253–273 (LDSTQVFAITTTLIVLPTVWL), 278–298 (LLSYLSAGGVISSILLALCLF), 320–340 (IPVAIGIYGFGFGSHSVFPNI), 353–373 (VLLISFAFCTLFYIAVAVCGF), 397–417 (IAVWTAVVTPMTKYALTITPV), 436–456 (GVSMLFRTILVLSTLVVALTV), 458–478 (FFATVAALIGSFIAMLIALIF), and 494–514 (FQIGICILIVIIGIVSGCCGT).

The protein belongs to the amino acid/polyamine transporter 2 family. Amino acid/auxin permease (AAAP) (TC 2.A.18.5) subfamily.

It is found in the membrane. This is Amino acid transporter AVT1E from Arabidopsis thaliana (Mouse-ear cress).